Consider the following 283-residue polypeptide: 4-diphosphocytidyl-2-C-methyl-D-erythritol kinase (283 aa).

The active site involves lysine 10. Position 99–109 (99–109) interacts with ATP; that stretch reads PMGGGLGGGSS. Aspartate 141 is a catalytic residue.

This sequence belongs to the GHMP kinase family. IspE subfamily. In terms of assembly, homodimer.

It catalyses the reaction 4-CDP-2-C-methyl-D-erythritol + ATP = 4-CDP-2-C-methyl-D-erythritol 2-phosphate + ADP + H(+). It participates in isoprenoid biosynthesis; isopentenyl diphosphate biosynthesis via DXP pathway; isopentenyl diphosphate from 1-deoxy-D-xylulose 5-phosphate: step 3/6. Catalyzes the phosphorylation of the position 2 hydroxy group of 4-diphosphocytidyl-2C-methyl-D-erythritol. The polypeptide is 4-diphosphocytidyl-2-C-methyl-D-erythritol kinase (Shigella dysenteriae serotype 1 (strain Sd197)).